Reading from the N-terminus, the 87-residue chain is Small ribosomal subunit protein uS17 (87 aa).

Belongs to the universal ribosomal protein uS17 family. As to quaternary structure, part of the 30S ribosomal subunit.

Functionally, one of the primary rRNA binding proteins, it binds specifically to the 5'-end of 16S ribosomal RNA. The protein is Small ribosomal subunit protein uS17 of Staphylococcus haemolyticus (strain JCSC1435).